We begin with the raw amino-acid sequence, 619 residues long: MEAEETMECLQEFPEHHKMILDRLNEQREQDRFTDITLIVDGHHFKAHKAVLAACSKFFYKFFQEFTQEPLVEIEGVSKMAFRHLIEFTYTAKLMIQGEEEANDVWKAAEFLQMLEAIKALEVRNKENSAPLEENTTGKNEAKKRKIAETSNVITESLPSAESEPVEIEVEIAEGTIEVEDEGIEALEEMASAKQSIKYIQSTGSSDDSALALLADITSKYRQGESKGQISEDDCASDPISKQVEGIEIVELQLSHVKDLFHCEKCNRSFKLFYHFKEHMKSHSTESFKCEICNKRYLRESAWKQHLNCYHLEEGGVSKKQRTGKKIHICQYCDKQFDHFGHFKEHLRKHTGEKPFECSNCHERFARNSTLKCHLTACQTGVGAKKGRKKLYECQVCNSVFNSWDQFKDHLVIHTGDKPNHCTLCDLWFMQGNELRRHLSDAHNISERIVTEEVLSVETHLQTEPVTSMTIIEQVGKVHVLPLLQVQVDSAQVTVEQVHPDLLQDSQVHDSQMTGLPEQVQVSYLEVGRIQTEEGTEVHVEELHVERVNQMPVEVQTELLEADLDHMTPEIMSQEEREPNHADAAMEEHEDAEGLETKPSEYSQARKTENDRTSLPVLE.

In terms of domain architecture, BTB spans 34-98 (TDITLIVDGH…TYTAKLMIQG (65 aa)). Residues 137-148 (TGKNEAKKRKIA) carry the Nuclear localization signal 1 motif. S231 carries the phosphoserine modification. 3 consecutive C2H2-type zinc fingers follow at residues 261–283 (FHCEKCNRSFKLFYHFKEHMKSH), 288–311 (FKCEICNKRYLRESAWKQHLNCYH), and 328–350 (HICQYCDKQFDHFGHFKEHLRKH). Glycyl lysine isopeptide (Lys-Gly) (interchain with G-Cter in SUMO2) cross-links involve residues K289 and K295. Positions 317-328 (VSKKQRTGKKIH) match the Nuclear localization signal 2 motif. The segment at 356–381 (FECSNCHERFARNSTLKCHLTACQTG) adopts a C2H2-type 4; degenerate zinc-finger fold. C2H2-type zinc fingers lie at residues 392–414 (YECQVCNSVFNSWDQFKDHLVIH) and 420–443 (NHCTLCDLWFMQGNELRRHLSDAH). Composition is skewed to basic and acidic residues over residues 574-587 (QEEREPNHADAAME) and 595-612 (LETKPSEYSQARKTENDR). Positions 574 to 619 (QEEREPNHADAAMEEHEDAEGLETKPSEYSQARKTENDRTSLPVLE) are disordered. K598 is covalently cross-linked (Glycyl lysine isopeptide (Lys-Gly) (interchain with G-Cter in SUMO)).

It belongs to the krueppel C2H2-type zinc-finger protein family. Monosumoylated at Lys-598 by CBX4 and UHRF2. Sumoylation may potentiate ZNF131 inhibition of estrogen signaling. Sumoylation does not interfere with ubiquitination. In terms of processing, ubiquitinated. Ubiquitously expressed. Predominant expression is found in the developing central nervous system with strongest signals in the forebrain, midbrain, and hindbrain areas and in the neural tube.

The protein resides in the nucleus. Functionally, may be involved in transcriptional regulation as a repressor of ESR1/ER-alpha signaling. Plays a role during development and organogenesis as well as in the function of the adult central nervous system. This chain is Zinc finger protein 131 (Znf131), found in Mus musculus (Mouse).